Here is a 323-residue protein sequence, read N- to C-terminus: Trihelix transcription factor GT-3a (323 aa).

A compositionally biased stretch (basic residues) spans 1-20 (MDRRNPFQHHHHHHQLHHHL). The disordered stretch occupies residues 1-51 (MDRRNPFQHHHHHHQLHHHLIQQQQLPPPPLSTTATMDPGGGGGGGERIPQ). The Myb-like domain occupies 52–108 (WSIEETKELLAIREELDQTFMETKRNKLLWEVVAAKMADKGFVRSAEQCKSKWKNLV). 3 disordered regions span residues 147–176 (EATE…EPNQ), 190–220 (KRET…GTKA), and 269–297 (ELEE…ARAQ). The segment covering 164 to 176 (SDDEEEEVDEPNQ) has biased composition (acidic residues).

Homodimer. Heterodimer with GT-3B. Predominantly expressed in roots and flower buds.

It localises to the nucleus. Probable transcription factor that binds specifically to the core DNA sequence 5'-GTTAC-3'. The chain is Trihelix transcription factor GT-3a (GT-3A) from Arabidopsis thaliana (Mouse-ear cress).